The chain runs to 159 residues: ATP synthase subunit delta, mitochondrial (159 aa).

The N-terminal 23 residues, 1–23 (MFRLSAARTLAKSVNTVVAKRTY), are a transit peptide targeting the mitochondrion.

This sequence belongs to the ATPase epsilon chain family. In terms of assembly, F-type ATPases have 2 components, CF(1) - the catalytic core - and CF(0) - the membrane proton channel. CF(1) has five subunits: alpha(3), beta(3), gamma(1), delta(1), epsilon(1). CF(0) has three main subunits: a, b and c.

The protein localises to the mitochondrion. Its subcellular location is the mitochondrion inner membrane. Functionally, mitochondrial membrane ATP synthase (F(1)F(0) ATP synthase or Complex V) produces ATP from ADP in the presence of a proton gradient across the membrane which is generated by electron transport complexes of the respiratory chain. F-type ATPases consist of two structural domains, F(1) - containing the extramembraneous catalytic core, and F(0) - containing the membrane proton channel, linked together by a central stalk and a peripheral stalk. During catalysis, ATP turnover in the catalytic domain of F(1) is coupled via a rotary mechanism of the central stalk subunits to proton translocation. Part of the complex F(1) domain and of the central stalk which is part of the complex rotary element. Rotation of the central stalk against the surrounding alpha(3)beta(3) subunits leads to hydrolysis of ATP in three separate catalytic sites on the beta subunits. The chain is ATP synthase subunit delta, mitochondrial (ATP16) from Kluyveromyces lactis (strain ATCC 8585 / CBS 2359 / DSM 70799 / NBRC 1267 / NRRL Y-1140 / WM37) (Yeast).